The chain runs to 339 residues: Very-long-chain 3-oxoacyl-CoA reductase (339 aa).

Residues 19 to 39 (VALFLLSIGGLFTACKLFSFC) traverse the membrane as a helical segment. NADP(+) is bound by residues Leu64, Lys105, Asp119, Asp127, Asn146, Tyr213, Lys217, Val246, and Ser248. Tyr213 functions as the Proton donor in the catalytic mechanism. Lys217 functions as the Lowers pKa of active site Tyr in the catalytic mechanism.

It belongs to the short-chain dehydrogenases/reductases (SDR) family.

Its subcellular location is the endoplasmic reticulum membrane. The catalysed reaction is a very-long-chain (3R)-3-hydroxyacyl-CoA + NADP(+) = a very-long-chain 3-oxoacyl-CoA + NADPH + H(+). The protein operates within lipid metabolism; fatty acid biosynthesis. In terms of biological role, component of the microsomal membrane bound fatty acid elongation system, which produces the 26-carbon very long-chain fatty acids (VLCFA) from palmitate. Catalyzes the reduction of the 3-ketoacyl-CoA intermediate that is formed in each cycle of fatty acid elongation. VLCFAs serve as precursors for ceramide and sphingolipids. The sequence is that of Very-long-chain 3-oxoacyl-CoA reductase from Ajellomyces capsulatus (strain NAm1 / WU24) (Darling's disease fungus).